A 552-amino-acid chain; its full sequence is Putative pentatricopeptide repeat-containing protein At1g64310 (552 aa).

PPR repeat units lie at residues 39 to 69 (DPYF…FPER), 70 to 104 (SVFL…DTRP), 105 to 139 (DNFT…GLGF), 140 to 170 (DQIC…IPDP), 171 to 205 (DLAL…GHQP), 206 to 240 (NCYT…NLDS), 241 to 271 (HSYV…ISEP), 272 to 306 (DLVA…GKKP), 307 to 341 (DCVL…GLEL), 342 to 372 (DIKV…IPEK), 373 to 407 (NIVS…GLIP), 408 to 438 (DEIT…MKSE), and 444 to 474 (QTEH…LQKP). Residues 479–552 (ILGALLSCCE…GGKLPGISWF (74 aa)) form a type E motif; degenerate region.

Belongs to the PPR family. PCMP-E subfamily.

In Arabidopsis thaliana (Mouse-ear cress), this protein is Putative pentatricopeptide repeat-containing protein At1g64310 (PCMP-E65).